A 312-amino-acid chain; its full sequence is Putative olfactory receptor 1F2 (312 aa).

Over 1 to 25 the chain is Extracellular; the sequence is MERDKPVSVSEFLLLGLSRQPQQQH. A helical membrane pass occupies residues 26–49; the sequence is LLFVFFLSMYLATVLGNLLIILAI. Over 50-57 the chain is Cytoplasmic; it reads SIDSRLHT. The chain crosses the membrane as a helical span at residues 58–78; it reads PMYFFLSNMSFVDNCFSTTVP. The Extracellular segment spans residues 79–99; the sequence is KMLANHILRTQTISFSGCLMQ. Cysteine 96 and cysteine 188 form a disulfide bridge. A helical membrane pass occupies residues 100-119; it reads MYFISELADMDNFLLAVMAY. The Cytoplasmic portion of the chain corresponds to 120-138; it reads DRFVAVCRPLHYTAKMIHQ. Residues 139-157 form a helical membrane-spanning segment; it reads LCALLVTGSWVVANSNALL. The Extracellular segment spans residues 158 to 195; it reads HTLLMARLSFCADNTIPHIFCDVTPLLKLSCSDTHLSE. Residues 196–218 traverse the membrane as a helical segment; that stretch reads VMILTEAALVTITPFLCLLASYM. The Cytoplasmic segment spans residues 219–235; sequence HITCVVLRVPSTKGRWK. The helical transmembrane segment at 236 to 258 threads the bilayer; it reads AFSTCGSHLAVVLLFYGTIMSPY. Residues 259-271 are Extracellular-facing; the sequence is FRTSSSHSAQRDI. A helical membrane pass occupies residues 272–291; it reads AAAVRFTVVTPVMNPLIYSL. Residues 292–312 are Cytoplasmic-facing; it reads RNKDIKGALVKVVAVKFFSVQ.

It belongs to the G-protein coupled receptor 1 family.

It localises to the cell membrane. Functionally, odorant receptor. The polypeptide is Putative olfactory receptor 1F2 (OR1F2P) (Homo sapiens (Human)).